A 231-amino-acid chain; its full sequence is Large ribosomal subunit protein uL1 (231 aa).

Belongs to the universal ribosomal protein uL1 family. Part of the 50S ribosomal subunit.

Binds directly to 23S rRNA. The L1 stalk is quite mobile in the ribosome, and is involved in E site tRNA release. Functionally, protein L1 is also a translational repressor protein, it controls the translation of the L11 operon by binding to its mRNA. The protein is Large ribosomal subunit protein uL1 of Shouchella clausii (strain KSM-K16) (Alkalihalobacillus clausii).